Consider the following 271-residue polypeptide: tRNA pseudouridine synthase A (271 aa).

Asp-54 functions as the Nucleophile in the catalytic mechanism. Tyr-112 lines the substrate pocket.

The protein belongs to the tRNA pseudouridine synthase TruA family. Homodimer.

It carries out the reaction uridine(38/39/40) in tRNA = pseudouridine(38/39/40) in tRNA. Its function is as follows. Formation of pseudouridine at positions 38, 39 and 40 in the anticodon stem and loop of transfer RNAs. The sequence is that of tRNA pseudouridine synthase A from Acinetobacter baylyi (strain ATCC 33305 / BD413 / ADP1).